We begin with the raw amino-acid sequence, 307 residues long: tRNA dimethylallyltransferase 1 (307 aa).

10–17 lines the ATP pocket; that stretch reads GPTASGKT. 12–17 is a binding site for substrate; sequence TASGKT. Residues 35–38 are interaction with substrate tRNA; it reads DSRQ.

Belongs to the IPP transferase family. As to quaternary structure, monomer. Requires Mg(2+) as cofactor.

The enzyme catalyses adenosine(37) in tRNA + dimethylallyl diphosphate = N(6)-dimethylallyladenosine(37) in tRNA + diphosphate. In terms of biological role, catalyzes the transfer of a dimethylallyl group onto the adenine at position 37 in tRNAs that read codons beginning with uridine, leading to the formation of N6-(dimethylallyl)adenosine (i(6)A). The sequence is that of tRNA dimethylallyltransferase 1 from Geotalea daltonii (strain DSM 22248 / JCM 15807 / FRC-32) (Geobacter daltonii).